Here is a 309-residue protein sequence, read N- to C-terminus: Homoserine O-acetyltransferase (309 aa).

The Acyl-thioester intermediate role is filled by Cys142. Positions 163 and 192 each coordinate substrate. Residue His235 is the Proton acceptor of the active site. Glu237 is an active-site residue. Residue Arg249 participates in substrate binding.

This sequence belongs to the MetA family.

The protein resides in the cytoplasm. It carries out the reaction L-homoserine + acetyl-CoA = O-acetyl-L-homoserine + CoA. The protein operates within amino-acid biosynthesis; L-methionine biosynthesis via de novo pathway; O-acetyl-L-homoserine from L-homoserine: step 1/1. In terms of biological role, transfers an acetyl group from acetyl-CoA to L-homoserine, forming acetyl-L-homoserine. This is Homoserine O-acetyltransferase from Petrotoga mobilis (strain DSM 10674 / SJ95).